Consider the following 70-residue polypeptide: Large ribosomal subunit protein bL28 (70 aa).

Positions 1–26 (MAKRCEVCGKAPRSGNTVSHSDKKSG) are disordered.

The protein belongs to the bacterial ribosomal protein bL28 family.

This is Large ribosomal subunit protein bL28 (rpmB) from Thermotoga maritima (strain ATCC 43589 / DSM 3109 / JCM 10099 / NBRC 100826 / MSB8).